The following is a 95-amino-acid chain: Small ribosomal subunit protein bS6 (95 aa).

This sequence belongs to the bacterial ribosomal protein bS6 family.

Binds together with bS18 to 16S ribosomal RNA. In Exiguobacterium sibiricum (strain DSM 17290 / CCUG 55495 / CIP 109462 / JCM 13490 / 255-15), this protein is Small ribosomal subunit protein bS6.